The primary structure comprises 188 residues: Large ribosomal subunit protein uL5 (188 aa).

The protein belongs to the universal ribosomal protein uL5 family. As to quaternary structure, part of the 50S ribosomal subunit; part of the 5S rRNA/L5/L18/L25 subcomplex. Contacts the 5S rRNA and the P site tRNA. Forms a bridge to the 30S subunit in the 70S ribosome.

This is one of the proteins that bind and probably mediate the attachment of the 5S RNA into the large ribosomal subunit, where it forms part of the central protuberance. In the 70S ribosome it contacts protein S13 of the 30S subunit (bridge B1b), connecting the 2 subunits; this bridge is implicated in subunit movement. Contacts the P site tRNA; the 5S rRNA and some of its associated proteins might help stabilize positioning of ribosome-bound tRNAs. The chain is Large ribosomal subunit protein uL5 from Aquifex aeolicus (strain VF5).